The chain runs to 127 residues: Histone H2A (127 aa).

Over residues 1–20 the composition is skewed to basic residues; it reads MSGRGKGGKAKTGGKAKSRS. The tract at residues 1–23 is disordered; that stretch reads MSGRGKGGKAKTGGKAKSRSSRA. N-acetylserine is present on Ser2. Position 2 is a phosphoserine (Ser2). Lys6, Lys9, and Lys11 each carry N6-acetyllysine; partial. Position 106 is an N5-methylglutamine (Gln106). A Glycyl lysine isopeptide (Lys-Gly) (interchain with G-Cter in ubiquitin) cross-link involves residue Lys121.

Belongs to the histone H2A family. As to quaternary structure, the nucleosome is a histone octamer containing two molecules each of H2A, H2B, H3 and H4 assembled in one H3-H4 heterotetramer and two H2A-H2B heterodimers. The octamer wraps approximately 147 bp of DNA. In terms of processing, monoubiquitination of Lys-121 gives a specific tag for epigenetic transcriptional repression. Phosphorylation on Ser-2 is enhanced during mitosis. Phosphorylation on Ser-2 directly represses transcription.

It localises to the nucleus. The protein localises to the chromosome. Functionally, core component of nucleosome. Nucleosomes wrap and compact DNA into chromatin, limiting DNA accessibility to the cellular machineries which require DNA as a template. Histones thereby play a central role in transcription regulation, DNA repair, DNA replication and chromosomal stability. DNA accessibility is regulated via a complex set of post-translational modifications of histones, also called histone code, and nucleosome remodeling. This Caenorhabditis elegans protein is Histone H2A (his-3).